A 935-amino-acid polypeptide reads, in one-letter code: Isoleucine--tRNA ligase (935 aa).

The 'HIGH' region signature appears at 58 to 68 (PYANGSIHVGH). Residue Glu558 participates in L-isoleucyl-5'-AMP binding. The 'KMSKS' region signature appears at 599-603 (KMSKS). Position 602 (Lys602) interacts with ATP. Residues Cys897, Cys900, Cys917, and Cys920 each coordinate Zn(2+).

It belongs to the class-I aminoacyl-tRNA synthetase family. IleS type 1 subfamily. Monomer. Zn(2+) is required as a cofactor.

It localises to the cytoplasm. The catalysed reaction is tRNA(Ile) + L-isoleucine + ATP = L-isoleucyl-tRNA(Ile) + AMP + diphosphate. In terms of biological role, catalyzes the attachment of isoleucine to tRNA(Ile). As IleRS can inadvertently accommodate and process structurally similar amino acids such as valine, to avoid such errors it has two additional distinct tRNA(Ile)-dependent editing activities. One activity is designated as 'pretransfer' editing and involves the hydrolysis of activated Val-AMP. The other activity is designated 'posttransfer' editing and involves deacylation of mischarged Val-tRNA(Ile). This chain is Isoleucine--tRNA ligase, found in Francisella tularensis subsp. novicida (strain U112).